Consider the following 127-residue polypeptide: MAIWQGRSLKKPSGGRIVLARKKRKRELGREPSNTRVAEQDKRKIIRTYGGNRKVRLTAAAYANVFDKSGKGRKVRIIRVLENPANRQFARRNIITKGAIIETEIGKAKVTSRPGQDGVVNAILLEE.

This sequence belongs to the eukaryotic ribosomal protein eS8 family. Part of the 30S ribosomal subunit.

In Pyrococcus horikoshii (strain ATCC 700860 / DSM 12428 / JCM 9974 / NBRC 100139 / OT-3), this protein is Small ribosomal subunit protein eS8 (rps8e).